The sequence spans 111 residues: Large ribosomal subunit protein P2 (111 aa).

The interval 62 to 111 (LASVPSGGAGGAAAAGGAAAAGGAAEAAPEEAKEEEKEESDDDMGFGLFD) is disordered. Residues 76–88 (AGGAAAAGGAAEA) show a composition bias toward low complexity. Ser-101 bears the Phosphoserine mark.

The protein belongs to the eukaryotic ribosomal protein P1/P2 family. P1 and P2 exist as dimers at the large ribosomal subunit.

In terms of biological role, plays an important role in the elongation step of protein synthesis. The polypeptide is Large ribosomal subunit protein P2 (Podospora anserina (Pleurage anserina)).